A 59-amino-acid polypeptide reads, in one-letter code: Small ribosomal subunit protein bS21 (59 aa).

Residues 40-59 (KPSIKKRAKSKAALKYKKQR) form a disordered region.

The protein belongs to the bacterial ribosomal protein bS21 family.

In Protochlamydia amoebophila (strain UWE25), this protein is Small ribosomal subunit protein bS21.